The sequence spans 61 residues: MAKLAITLTRSTIGRPEGQRVTVRTLGLRKMHQTVVVPDNVAMRGMINKVSHLVTVKEINE.

This sequence belongs to the universal ribosomal protein uL30 family. Part of the 50S ribosomal subunit.

In Exiguobacterium sp. (strain ATCC BAA-1283 / AT1b), this protein is Large ribosomal subunit protein uL30.